Here is a 229-residue protein sequence, read N- to C-terminus: Large ribosomal subunit protein uL1 (229 aa).

It belongs to the universal ribosomal protein uL1 family. Part of the 50S ribosomal subunit.

In terms of biological role, binds directly to 23S rRNA. The L1 stalk is quite mobile in the ribosome, and is involved in E site tRNA release. Protein L1 is also a translational repressor protein, it controls the translation of the L11 operon by binding to its mRNA. In Streptococcus pyogenes serotype M3 (strain SSI-1), this protein is Large ribosomal subunit protein uL1.